A 113-amino-acid chain; its full sequence is U11-theraphotoxin-Hhn1j (113 aa).

An N-terminal signal peptide occupies residues 1 to 21; that stretch reads MNTVRVTFLLVFVLAVSLGQA. The propeptide occupies 22-74; sequence DKDENRMEMQEKTEQGKSYLDFAENLLLQKLEELEAKLLEEDSEESRNSRQKR. A compositionally biased stretch (basic and acidic residues) spans 60-69; it reads LEEDSEESRN. Residues 60–83 are disordered; that stretch reads LEEDSEESRNSRQKRCIGEGVPCD. 3 cysteine pairs are disulfide-bonded: C75–C90, C82–C95, and C89–C110.

Belongs to the neurotoxin 14 (magi-1) family. 01 (HNTX-16) subfamily. As to expression, expressed by the venom gland.

The protein resides in the secreted. Its function is as follows. Probable ion channel inhibitor. The polypeptide is U11-theraphotoxin-Hhn1j (Cyriopagopus hainanus (Chinese bird spider)).